Consider the following 349-residue polypeptide: DNA integrity scanning protein DisA (349 aa).

The DAC domain maps to 3-143 (KQDLMDIIVK…LKYRLKNFDE (141 aa)). ATP is bound by residues Gly-70, Val-88, and 101-105 (TRHRT).

This sequence belongs to the DisA family. Homooctamer. Mg(2+) is required as a cofactor.

It carries out the reaction 2 ATP = 3',3'-c-di-AMP + 2 diphosphate. Functionally, participates in a DNA-damage check-point. DisA forms globular foci that rapidly scan along the chromosomes searching for lesions. Its function is as follows. Also has diadenylate cyclase activity, catalyzing the condensation of 2 ATP molecules into cyclic di-AMP (c-di-AMP). c-di-AMP likely acts as a signaling molecule that may couple DNA integrity with a cellular process. The polypeptide is DNA integrity scanning protein DisA (Fusobacterium nucleatum subsp. nucleatum (strain ATCC 25586 / DSM 15643 / BCRC 10681 / CIP 101130 / JCM 8532 / KCTC 2640 / LMG 13131 / VPI 4355)).